Consider the following 1070-residue polypeptide: DNA-directed RNA polymerase subunit beta (1070 aa).

This sequence belongs to the RNA polymerase beta chain family. In plastids the minimal PEP RNA polymerase catalytic core is composed of four subunits: alpha, beta, beta', and beta''. When a (nuclear-encoded) sigma factor is associated with the core the holoenzyme is formed, which can initiate transcription.

It is found in the plastid. It localises to the chloroplast. It catalyses the reaction RNA(n) + a ribonucleoside 5'-triphosphate = RNA(n+1) + diphosphate. In terms of biological role, DNA-dependent RNA polymerase catalyzes the transcription of DNA into RNA using the four ribonucleoside triphosphates as substrates. This Phalaenopsis aphrodite subsp. formosana (Moth orchid) protein is DNA-directed RNA polymerase subunit beta.